Here is a 691-residue protein sequence, read N- to C-terminus: MEASSGSSPPHSQENPPEHGGDMGGAPAEEIGGEAADDFMFAEDTFPSLPDFPCLSSPSSSTFSSNSSSNSSSAYTNTAGRAGGEPSEPASAGEGFDALDDIDQLLDFASLSMPWDSEPFPGVSMMLENAMSAPPQPVGDGMSEEKAVPEGTTGGEEACMDASEGEELPRFFMEWLTSNRENISAEDLRGIRLRRSTIEAAAARLGGGRQGTMQLLKLILTWVQNHHLQRKRPRDVMEEEAGLHVQLPSPVANPPGYEFPAGGQDMAAGGGTSWMPHQQAFTPPAAYGGDAVYPSAAGQQYSFHQGPSTSSVVVNSQPFSPPPVGDMHGANMAWPQQYVPFPPPGASTGSYPMPQPFSPGFGGQYAGAGAGHLSVAPQRMAGVEASATKEARKKRMARQRRLSCLQQQRSQQLSLGQIQTSVHLQEPSPRSTHSGPVTPSAGGWGFWSPSSQQQVQNPLSKSNSSRAPPSSLEAAAAAPQTKPAPAGARQDDIHHRLAAASDKRQGAKADKNLRFLLQKVLKQSDVGSLGRIVLPKKEAEVHLPELKTRDGISIPMEDIGTSRVWNMRYRFWPNNKSRMYLLENTGEFVRSNELQEGDFIVIYSDVKSGKYLIRGVKVRPPPAQEQGSGSSGGGKHRPLCPAGPERAAAAGAPEDAVVDGVSGACKGRSPEGVRRVRQQGAGAMSQMAVSI.

The span at 1–15 (MEASSGSSPPHSQEN) shows a compositional bias: polar residues. Disordered stretches follow at residues 1–95 (MEAS…AGEG), 135–158 (PQPV…GEEA), 384–489 (EASA…AGAR), and 618–691 (VRPP…AVSI). The transcriptional activation stretch occupies residues 1–121 (MEASSGSSPP…SMPWDSEPFP (121 aa)). Over residues 31-41 (IGGEAADDFMF) the composition is skewed to acidic residues. The segment covering 56–73 (SSPSSSTFSSNSSSNSSS) has biased composition (low complexity). Basic residues predominate over residues 391 to 401 (ARKKRMARQRR). A compositionally biased stretch (low complexity) spans 402–419 (LSCLQQQRSQQLSLGQIQ). 2 stretches are compositionally biased toward polar residues: residues 420–437 (TSVH…SGPV) and 448–459 (SPSSQQQVQNPL). Low complexity predominate over residues 460–488 (SKSNSSRAPPSSLEAAAAAPQTKPAPAGA). The TF-B3 DNA-binding region spans 517–619 (LQKVLKQSDV…KYLIRGVKVR (103 aa)). A compositionally biased stretch (low complexity) spans 642-661 (AGPERAAAAGAPEDAVVDGV).

In terms of tissue distribution, seed.

It localises to the cytoplasm. It is found in the nucleus. Its function is as follows. Transcriptional activator specifically required for expression of the maturation program in the seed development. Probably potentiates the response to the seed-specific hormone abscisic acid (ABA). May bind to DNA indirectly. This chain is Regulatory protein viviparous-1 (VP1), found in Zea mays (Maize).